The primary structure comprises 361 residues: Peptide chain release factor 1 (361 aa).

Position 237 is an N5-methylglutamine (Q237).

This sequence belongs to the prokaryotic/mitochondrial release factor family. In terms of processing, methylated by PrmC. Methylation increases the termination efficiency of RF1.

Its subcellular location is the cytoplasm. Functionally, peptide chain release factor 1 directs the termination of translation in response to the peptide chain termination codons UAG and UAA. The chain is Peptide chain release factor 1 from Alcanivorax borkumensis (strain ATCC 700651 / DSM 11573 / NCIMB 13689 / SK2).